We begin with the raw amino-acid sequence, 328 residues long: Malate dehydrogenase (328 aa).

NAD(+) is bound at residue 11–17 (GAAGQIG). Substrate contacts are provided by Arg-94 and Arg-100. NAD(+) contacts are provided by residues Asn-107, Gln-114, and 131–133 (VGN). 2 residues coordinate substrate: Asn-133 and Arg-164. His-189 serves as the catalytic Proton acceptor.

The protein belongs to the LDH/MDH superfamily. MDH type 2 family.

The enzyme catalyses (S)-malate + NAD(+) = oxaloacetate + NADH + H(+). Its function is as follows. Catalyzes the reversible oxidation of malate to oxaloacetate. The chain is Malate dehydrogenase from Xanthomonas oryzae pv. oryzae (strain PXO99A).